The following is a 368-amino-acid chain: Carbamoyl phosphate synthase small chain (368 aa).

The interval 1 to 178 is CPSase; it reads MKAVLGLEDG…GAECAWKGSG (178 aa). Positions 45, 230, and 232 each coordinate L-glutamine. The 187-residue stretch at 182–368 folds into the Glutamine amidotransferase type-1 domain; it reads HAVVVDLGIK…KVVKVLGGDL (187 aa). Cys257 functions as the Nucleophile in the catalytic mechanism. L-glutamine contacts are provided by Phe258, Gln261, Asn299, Gly301, and Tyr302. Residues His342 and Glu344 contribute to the active site.

The protein belongs to the CarA family. Composed of two chains; the small (or glutamine) chain promotes the hydrolysis of glutamine to ammonia, which is used by the large (or ammonia) chain to synthesize carbamoyl phosphate. Tetramer of heterodimers (alpha,beta)4.

The catalysed reaction is hydrogencarbonate + L-glutamine + 2 ATP + H2O = carbamoyl phosphate + L-glutamate + 2 ADP + phosphate + 2 H(+). The enzyme catalyses L-glutamine + H2O = L-glutamate + NH4(+). Its pathway is amino-acid biosynthesis; L-arginine biosynthesis; carbamoyl phosphate from bicarbonate: step 1/1. It participates in pyrimidine metabolism; UMP biosynthesis via de novo pathway; (S)-dihydroorotate from bicarbonate: step 1/3. Functionally, small subunit of the glutamine-dependent carbamoyl phosphate synthetase (CPSase). CPSase catalyzes the formation of carbamoyl phosphate from the ammonia moiety of glutamine, carbonate, and phosphate donated by ATP, constituting the first step of 2 biosynthetic pathways, one leading to arginine and/or urea and the other to pyrimidine nucleotides. The small subunit (glutamine amidotransferase) binds and cleaves glutamine to supply the large subunit with the substrate ammonia. The protein is Carbamoyl phosphate synthase small chain of Methanosarcina acetivorans (strain ATCC 35395 / DSM 2834 / JCM 12185 / C2A).